Reading from the N-terminus, the 465-residue chain is GTPase Der (465 aa).

EngA-type G domains follow at residues 27–190 (PVLA…PEAP) and 202–375 (RRIA…AGWE). GTP is bound by residues 33 to 40 (GRPNVGKS), 80 to 84 (DTGGW), 142 to 145 (NKVD), 208 to 215 (GRPNVGKS), 255 to 259 (DTAGI), and 320 to 323 (NKWD). Residues 376–458 (TRVPTGRLNA…PIHISVRVRE (83 aa)) form the KH-like domain.

Belongs to the TRAFAC class TrmE-Era-EngA-EngB-Septin-like GTPase superfamily. EngA (Der) GTPase family. As to quaternary structure, associates with the 50S ribosomal subunit.

In terms of biological role, GTPase that plays an essential role in the late steps of ribosome biogenesis. The chain is GTPase Der from Streptomyces coelicolor (strain ATCC BAA-471 / A3(2) / M145).